The sequence spans 401 residues: uncharacterized protein (401 aa).

This is an uncharacterized protein from Mycobacterium tuberculosis (strain CDC 1551 / Oshkosh).